We begin with the raw amino-acid sequence, 347 residues long: Phenylalanine--tRNA ligase alpha subunit (347 aa).

Glu-265 contacts Mg(2+).

The protein belongs to the class-II aminoacyl-tRNA synthetase family. Phe-tRNA synthetase alpha subunit type 1 subfamily. Tetramer of two alpha and two beta subunits. It depends on Mg(2+) as a cofactor.

It is found in the cytoplasm. The catalysed reaction is tRNA(Phe) + L-phenylalanine + ATP = L-phenylalanyl-tRNA(Phe) + AMP + diphosphate + H(+). In Mycolicibacterium vanbaalenii (strain DSM 7251 / JCM 13017 / BCRC 16820 / KCTC 9966 / NRRL B-24157 / PYR-1) (Mycobacterium vanbaalenii), this protein is Phenylalanine--tRNA ligase alpha subunit.